A 282-amino-acid polypeptide reads, in one-letter code: MKTPFSKMNGLGNKIIVADLRKAIHNITPQAIQALASNPQTHFDQIMAIHPPTQDADFRIEIWNADGSMAKACGNGTRCVIEWLANHNLGNNFRLETSTGIVEGKRQTDGLISVDMGRPYLNAKDMPVSREIIDTNHVDITAGPLQDACLVSVGNLHAIFFIESNIQNIPLEKYGPKLEHDPLFPERCNISIAQITSKKSLTLRTWERGAGLTQACGSAACASAVAAYRRGLTERHIDVNLPKGILSILYRDDEHIIMTGPTEHEFSGLFNPLTGTYKKDHL.

Residues asparagine 13, glutamine 45, and asparagine 64 each coordinate substrate. The active-site Proton donor is cysteine 73. Substrate-binding positions include 74 to 75, asparagine 155, asparagine 189, and 207 to 208; these read GN and ER. Residue cysteine 216 is the Proton acceptor of the active site. Residue 217–218 participates in substrate binding; sequence GS.

Belongs to the diaminopimelate epimerase family. Homodimer.

The protein localises to the cytoplasm. It catalyses the reaction (2S,6S)-2,6-diaminopimelate = meso-2,6-diaminopimelate. Its pathway is amino-acid biosynthesis; L-lysine biosynthesis via DAP pathway; DL-2,6-diaminopimelate from LL-2,6-diaminopimelate: step 1/1. In terms of biological role, catalyzes the stereoinversion of LL-2,6-diaminopimelate (L,L-DAP) to meso-diaminopimelate (meso-DAP), a precursor of L-lysine and an essential component of the bacterial peptidoglycan. In Bartonella bacilliformis (strain ATCC 35685 / KC583 / Herrer 020/F12,63), this protein is Diaminopimelate epimerase.